The primary structure comprises 211 residues: Small ribosomal subunit protein uS5 (211 aa).

An S5 DRBM domain is found at 58 to 121 (FEERIVKLKR…KKAHNSIHTV (64 aa)).

The protein belongs to the universal ribosomal protein uS5 family. In terms of assembly, part of the 30S ribosomal subunit. Contacts proteins S4 and S8.

Its function is as follows. With S4 and S12 plays an important role in translational accuracy. In terms of biological role, located at the back of the 30S subunit body where it stabilizes the conformation of the head with respect to the body. The polypeptide is Small ribosomal subunit protein uS5 (Mycoplasma genitalium (strain ATCC 33530 / DSM 19775 / NCTC 10195 / G37) (Mycoplasmoides genitalium)).